Reading from the N-terminus, the 481-residue chain is UDP-glycosyltransferase 72E3 (481 aa).

The active-site Proton acceptor is His18. His18 is an an anthocyanidin binding site. The active-site Charge relay is Asp111. The UDP-alpha-D-glucose site is built by Ala346, Gln348, His363, Trp366, Ser368, and Glu371. Position 386 (Ala386) interacts with an anthocyanidin. 2 residues coordinate UDP-alpha-D-glucose: Glu387 and Gln388.

This sequence belongs to the UDP-glycosyltransferase family. Expressed in seedlings and roots, and at lower levels in flowers and siliques.

It carries out the reaction (E)-4-coumarate + UDP-alpha-D-glucose = 4-O-(beta-D-glucosyl)-trans-4-coumarate + UDP + H(+). The catalysed reaction is (E)-sinapyl alcohol + UDP-alpha-D-glucose = 4-O-(beta-D-glucosyl)-trans-4-sinapoyl alcohol + UDP + H(+). It catalyses the reaction (E)-coniferol + UDP-alpha-D-glucose = 4-O-(beta-D-glucosyl)-(E)-coniferol + UDP + H(+). The enzyme catalyses (E)-sinapate + UDP-alpha-D-glucose = 4-O-(beta-D-glucosyl)-trans-sinapate + UDP + H(+). It carries out the reaction (E)-coniferaldehyde + UDP-alpha-D-glucose = 4-O-(beta-D-glucosyl)-4-(E)-coniferyl aldehyde + UDP + H(+). The catalysed reaction is (E)-sinapaldehyde + UDP-alpha-D-glucose = 4-O-(beta-D-glucosyl)-4-trans-sinapoyl aldehyde + UDP + H(+). Involved in the O-glucosylation of monolignols (alcohol monomers of lignin). Glucosylates coniferyl alcohol to form coniferyl alcohol 4-O-glucoside. Glucosylates sinapyl alcohol to form sinapyl alcohol 4-O-glucoside. Possesses low activity with sinapate as substrate. In Arabidopsis thaliana (Mouse-ear cress), this protein is UDP-glycosyltransferase 72E3.